A 664-amino-acid polypeptide reads, in one-letter code: Cyclic nucleotide-gated channel alpha-2 (664 aa).

A compositionally biased stretch (polar residues) spans 1 to 11 (MTEKTNGVKSS). Positions 1-49 (MTEKTNGVKSSPANNHNHHAPPAIKANGKDDHRTSSRPHSAADDDTSSE) are disordered. Over 1-144 (MTEKTNGVKS…PAGDWYYCWL (144 aa)) the chain is Cytoplasmic. Over residues 12–23 (PANNHNHHAPPA) the composition is skewed to low complexity. Residues 145-166 (FVIAMPVLYNWCLLVARACFSD) form a helical membrane-spanning segment. The Extracellular segment spans residues 167 to 176 (LQKGYYLVWL). A helical transmembrane segment spans residues 177–197 (VLDYVSDVVYIADLFIRLRTG). Topologically, residues 198–222 (FLEQGLLVKDTKKLRDNYIHTLQFK) are cytoplasmic. A helical membrane pass occupies residues 223-241 (LDVASIIPTDLIYFAVDIH). Topologically, residues 242–246 (SPEVR) are extracellular. A helical membrane pass occupies residues 247-265 (FNRLLHFARMFEFFDRTET). At 266-272 (RTNYPNI) the chain is on the cytoplasmic side. The ion conduction pathway stretch occupies residues 270–378 (PNIFRISNLV…GNVGSMISNM (109 aa)). The helical transmembrane segment at 273-296 (FRISNLVLYILVIIHWNACIYYAI) threads the bilayer. Residues 297-319 (SKSIGFGVDTWVYPNITDPEYGY) lie on the Extracellular side of the membrane. Helical transmembrane passes span 320-354 (LARE…LFVI) and 355-379 (FDFL…SNMN). A selectivity filter region spans residues 337-340 (TIGE). The interval 380 to 456 (ATRAEFQAKI…STLKKVRIFH (77 aa)) is C-linker. Residues 380-664 (ATRAEFQAKI…SPELAAADEP (285 aa)) lie on the Cytoplasmic side of the membrane. A cyclic nucleotide-binding domain region spans residues 460 to 580 (AGLLVELVLK…EERGREILMK (121 aa)). 3',5'-cyclic GMP is bound by residues G520, S523, R536, and T537. The 3',5'-cyclic AMP site is built by R536 and T537. Positions 597–651 (VQEKLGQLETNMETLYTRFGRLLAEYTGAQQKLKQRITVLETKMKQNNEDDYLSD) form a coiled coil. A disordered region spans residues 641–664 (KQNNEDDYLSDGMNSPELAAADEP).

The protein belongs to the cyclic nucleotide-gated cation channel (TC 1.A.1.5) family. CNGA2 subfamily. The olfactory cyclic nucleotide-gated channel is an heterotetramer composed of CNGA2, CNGA4 and CNGB1b subunits with 2:1:1 stoichiometry.

The protein localises to the cell projection. The protein resides in the cilium membrane. The enzyme catalyses Ca(2+)(in) = Ca(2+)(out). It carries out the reaction Na(+)(in) = Na(+)(out). The catalysed reaction is K(+)(in) = K(+)(out). It catalyses the reaction NH4(+)(in) = NH4(+)(out). The enzyme catalyses Rb(+)(in) = Rb(+)(out). It carries out the reaction Li(+)(in) = Li(+)(out). The catalysed reaction is Cs(+)(in) = Cs(+)(out). In terms of biological role, pore-forming subunit of the olfactory cyclic nucleotide-gated channel. Operates in the cilia of olfactory sensory neurons where chemical stimulation of the odorant is converted to an electrical signal. Mediates odorant-induced cAMP-dependent Ca(2+) influx triggering neuron depolarization. The rise of intracellular Ca(2+) levels potentiates the olfactory response by activating Ca(2+)-dependent Cl(-) channels, but it also serves as a negative feedback signal to desensitize the channel for rapid adaptation to odorants. Conducts cAMP- and cGMP-gated ion currents, with permeability for monovalent and divalent cations. The chain is Cyclic nucleotide-gated channel alpha-2 from Homo sapiens (Human).